The chain runs to 205 residues: Phosphoenolpyruvate guanylyltransferase (205 aa).

Phosphoenolpyruvate is bound by residues T137, G153, and S156.

The protein belongs to the CofC family.

It catalyses the reaction phosphoenolpyruvate + GTP + H(+) = enolpyruvoyl-2-diphospho-5'-guanosine + diphosphate. The protein operates within cofactor biosynthesis; coenzyme F420 biosynthesis. In terms of biological role, guanylyltransferase that catalyzes the activation of phosphoenolpyruvate (PEP) as enolpyruvoyl-2-diphospho-5'-guanosine, via the condensation of PEP with GTP. It is involved in the biosynthesis of coenzyme F420, a hydride carrier cofactor. The polypeptide is Phosphoenolpyruvate guanylyltransferase (Rubrobacter xylanophilus (strain DSM 9941 / JCM 11954 / NBRC 16129 / PRD-1)).